The chain runs to 504 residues: Probable protein phosphatase 2C 18 (504 aa).

Residues 1–49 (MGLCYSVDRTTGKEPGEASSTATTAETVEERSGSGRWRRPRDLKGGGDI) are disordered. The span at 17 to 26 (EASSTATTAE) shows a compositional bias: low complexity. Positions 67–399 (IACLYTQQGK…DDCTVVCLFL (333 aa)) constitute a PPM-type phosphatase domain. 4 residues coordinate Mn(2+): aspartate 103, glycine 104, aspartate 344, and aspartate 390. The interval 410–435 (TNVKKDSPKEESIESVTNSTSKEEDE) is disordered. Positions 412-421 (VKKDSPKEES) are enriched in basic and acidic residues.

The protein belongs to the PP2C family. It depends on Mg(2+) as a cofactor. The cofactor is Mn(2+).

It carries out the reaction O-phospho-L-seryl-[protein] + H2O = L-seryl-[protein] + phosphate. The enzyme catalyses O-phospho-L-threonyl-[protein] + H2O = L-threonyl-[protein] + phosphate. This Arabidopsis thaliana (Mouse-ear cress) protein is Probable protein phosphatase 2C 18.